A 101-amino-acid polypeptide reads, in one-letter code: UPF0235 protein Maeo_0841 (101 aa).

It belongs to the UPF0235 family.

This Methanococcus aeolicus (strain ATCC BAA-1280 / DSM 17508 / OCM 812 / Nankai-3) protein is UPF0235 protein Maeo_0841.